Consider the following 1401-residue polypeptide: DNA-directed RNA polymerase subunit beta (1401 aa).

Belongs to the RNA polymerase beta chain family. The RNAP catalytic core consists of 2 alpha, 1 beta, 1 beta' and 1 omega subunit. When a sigma factor is associated with the core the holoenzyme is formed, which can initiate transcription.

The enzyme catalyses RNA(n) + a ribonucleoside 5'-triphosphate = RNA(n+1) + diphosphate. In terms of biological role, DNA-dependent RNA polymerase catalyzes the transcription of DNA into RNA using the four ribonucleoside triphosphates as substrates. The sequence is that of DNA-directed RNA polymerase subunit beta from Desulforapulum autotrophicum (strain ATCC 43914 / DSM 3382 / VKM B-1955 / HRM2) (Desulfobacterium autotrophicum).